A 153-amino-acid polypeptide reads, in one-letter code: Transcription antitermination protein NusB (153 aa).

The protein belongs to the NusB family.

Its function is as follows. Involved in transcription antitermination. Required for transcription of ribosomal RNA (rRNA) genes. Binds specifically to the boxA antiterminator sequence of the ribosomal RNA (rrn) operons. This Fusobacterium nucleatum subsp. nucleatum (strain ATCC 25586 / DSM 15643 / BCRC 10681 / CIP 101130 / JCM 8532 / KCTC 2640 / LMG 13131 / VPI 4355) protein is Transcription antitermination protein NusB.